We begin with the raw amino-acid sequence, 255 residues long: Flagellar brake protein YcgR (255 aa).

The 119-residue stretch at 122–240 (QRRTYFRINT…ERDLQQVIFE (119 aa)) folds into the PilZ domain.

Belongs to the YcgR family. As to quaternary structure, monomer. Interacts with the flagellar basal bodies.

It is found in the bacterial flagellum basal body. Functionally, acts as a flagellar brake, regulating swimming and swarming in a bis-(3'-5') cyclic diguanylic acid (c-di-GMP)-dependent manner. Binds 1 c-di-GMP dimer per subunit. Increasing levels of c-di-GMP lead to decreased motility. The polypeptide is Flagellar brake protein YcgR (Pectobacterium carotovorum subsp. carotovorum (strain PC1)).